We begin with the raw amino-acid sequence, 888 residues long: G-protein coupled receptor family C group 6 member A (888 aa).

The signal sequence occupies residues 1–15 (MALLMTCFVIVFAAS). Residues 16–568 (QPCQTPDDLV…KEMEYLDSLA (553 aa)) are Extracellular-facing. N-linked (GlcNAc...) asparagine glycosylation is found at Asn251, Asn322, Asn532, and Asn544. The chain crosses the membrane as a helical span at residues 569–589 (ILLLALSLLGILFVLAIGIIF). At 590 to 604 (TRNLNTPVVKSSGEL) the chain is on the cytoplasmic side. The helical transmembrane segment at 605–625 (MVRYVILFCHFLNFAGTGFFI) threads the bilayer. At 626–641 (REPQSFTCKTRQTLIC) the chain is on the extracellular side. Residues 642–662 (MSFTLCISYILMKSLKILLAF) form a helical membrane-spanning segment. Residues 663-676 (SSKLQNFLKCFYKP) are Cytoplasmic-facing. The chain crosses the membrane as a helical span at residues 677–697 (IPIIFTCTGIVVVCTLLIFAA). Residues 698 to 718 (PAVGQNVSLPRVIIFECEEGS) lie on the Extracellular side of the membrane. A helical transmembrane segment spans residues 719 to 739 (ILAFGSMLGYAAILAFMCFIC). Residues 740–754 (AFKGRKFPENYNEAK) are Cytoplasmic-facing. The chain crosses the membrane as a helical span at residues 755-775 (FITFGMLIYFIAWITFIPIYT). The Extracellular segment spans residues 776–779 (FGKY). A helical membrane pass occupies residues 780–800 (MLVVEIIIILISNYGICCMFF). Topologically, residues 801–888 (PKCYVILSKQ…ALPPKRISSI (88 aa)) are cytoplasmic.

Belongs to the G-protein coupled receptor 3 family. As to quaternary structure, homodimer; disulfide-linked.

Its subcellular location is the cell membrane. Functionally, receptor activated by multiple ligands, including osteocalcin (BGLAP), basic amino acids, and various cations. Activated by amino acids with a preference for basic amino acids such as L-Lys, L-Arg and L-ornithine but also by small and polar amino acids. The L-alpha amino acids respond is augmented by divalent cations Ca(2+) and Mg(2+). Seems to act through a G(q)/G(11) and G(i)-coupled pathway. Regulates testosterone production by acting as a ligand for uncarboxylated osteocalcin hormone: osteocalcin-binding at the surface of Leydig cells initiates a signaling response that promotes the expression of enzymes required for testosterone synthesis in a CREB-dependent manner. Mediates the non-genomic effects of androgens in multiple tissue. May coordinate nutritional and hormonal anabolic signals through the sensing of extracellular amino acids, osteocalcin, divalent ions and its responsiveness to anabolic steroids. The polypeptide is G-protein coupled receptor family C group 6 member A (GPRC6A) (Bos taurus (Bovine)).